The chain runs to 417 residues: RH-like protein IA (417 aa).

A run of 11 helical transmembrane segments spans residues 12–32, 44–64, 77–97, 125–145, 172–192, 203–223, 238–258, 265–285, 287–307, 331–351, and 358–378; these read CLPL…YFFT, LVAS…GFGF, VAFS…LDGF, ISVD…MVLV, IYVF…KPLP, TIPS…WPSF, VFNT…GSSL, ISMS…GTSC, LITS…ISIG, NFSL…VHHT, and MIGF…TIAL.

This sequence belongs to the ammonium transporter (TC 2.A.49) family. Rh subfamily.

The protein resides in the membrane. In terms of biological role, may be part of an oligomeric complex which is likely to have a transport or channel function in the erythrocyte membrane. The sequence is that of RH-like protein IA from Pan troglodytes (Chimpanzee).